The chain runs to 326 residues: Cyclin-dependent kinase 1 (326 aa).

A Protein kinase domain is found at 16–306; the sequence is FTKLEKIGEG…SKKALHHPYF (291 aa). Residues 22–30 and Lys45 each bind ATP; that span reads IGEGTYGVV. Residue Asp140 is the Proton acceptor of the active site.

It belongs to the protein kinase superfamily. CMGC Ser/Thr protein kinase family. CDC2/CDKX subfamily. In terms of assembly, forms a stable but non-covalent complex with a regulatory subunit and with a cyclin. Interacts with cks-1.

Its subcellular location is the nucleus. It localises to the cytoplasm. The protein resides in the cytoskeleton. It is found in the microtubule organizing center. The protein localises to the centrosome. The catalysed reaction is L-seryl-[protein] + ATP = O-phospho-L-seryl-[protein] + ADP + H(+). It catalyses the reaction L-threonyl-[protein] + ATP = O-phospho-L-threonyl-[protein] + ADP + H(+). The enzyme catalyses [DNA-directed RNA polymerase] + ATP = phospho-[DNA-directed RNA polymerase] + ADP + H(+). With respect to regulation, phosphorylation both activates and inactivates the enzyme depending on the site of phosphorylation. In terms of biological role, plays a key role in the control of the eukaryotic cell cycle. Required for entry into S-phase and mitosis. Acts as a component of the kinase complex that phosphorylates the repetitive C-terminus of RNA polymerase II. May function in concert with npp-16 to arrest prophase blastomeres in response to anoxia. This chain is Cyclin-dependent kinase 1, found in Caenorhabditis briggsae.